The following is a 201-amino-acid chain: Ubiquinone biosynthesis accessory factor UbiJ (201 aa).

In terms of domain architecture, SCP2 spans 15 to 112 (LNTFLYRSPA…QVVQNFVALA (98 aa)).

It belongs to the UbiJ family. As to quaternary structure, component of the Ubi complex metabolon, which regroups five ubiquinone biosynthesis proteins (UbiE, UbiF, UbiG, UbiH and UbiI) and two accessory factors (UbiK and the lipid-binding protein UbiJ). Interacts with UbiK and forms a complex composed of 2 UbiK subunits and 1 UbiJ subunit. The UbiK-UbiJ complex interacts with palmitoleic acid.

It is found in the cytoplasm. It functions in the pathway cofactor biosynthesis; ubiquinone biosynthesis. Required for ubiquinone (coenzyme Q) biosynthesis under aerobic conditions. Binds hydrophobic ubiquinone biosynthetic intermediates via its SCP2 domain and is essential for the stability of the Ubi complex. May constitute a docking platform where Ubi enzymes assemble and access their SCP2-bound polyprenyl substrates. This Escherichia coli (strain K12) protein is Ubiquinone biosynthesis accessory factor UbiJ.